Here is a 142-residue protein sequence, read N- to C-terminus: Large ribosomal subunit protein uL11 (142 aa).

Belongs to the universal ribosomal protein uL11 family. In terms of assembly, part of the ribosomal stalk of the 50S ribosomal subunit. Interacts with L10 and the large rRNA to form the base of the stalk. L10 forms an elongated spine to which L12 dimers bind in a sequential fashion forming a multimeric L10(L12)X complex. Post-translationally, one or more lysine residues are methylated.

Forms part of the ribosomal stalk which helps the ribosome interact with GTP-bound translation factors. The protein is Large ribosomal subunit protein uL11 of Mycobacterium tuberculosis (strain ATCC 25177 / H37Ra).